The primary structure comprises 378 residues: MSHVDNGFRSLTLKRFPETDDVNPLQAWEAADEYLLQQLDDTEISGPLLILNDAFGALSCALAEHTPYSIGDSYLSELATRENLRHNDIAESSVKFLDSTAAYPPAPGVVLIKVPKTLALLEQQLRALRQVVTPQTRIIAGAKARDIHTSTLELFEKVLGPTTTTLAWKKARLINCTFSKPELADAPQTLSWKLDGTDWTIHNHANVFSRTGLDIGARFFMQHLPENLEGEIVDLGCGNGVIGLTLLAKNPQASVVFVDESPMAVASSRLNVETNMPEALDRCEFMINNALSGVEPFRFNAVLCNPPFHQKHALTDNVAWEMFHHARRCLKINGELYIVANRHLDYFHKLKKIFGNCTTIATNNKFVVLKAVKTGRRR.

Belongs to the methyltransferase superfamily. RlmG family.

Its subcellular location is the cytoplasm. It catalyses the reaction guanosine(1835) in 23S rRNA + S-adenosyl-L-methionine = N(2)-methylguanosine(1835) in 23S rRNA + S-adenosyl-L-homocysteine + H(+). In terms of biological role, specifically methylates the guanine in position 1835 (m2G1835) of 23S rRNA. The chain is Ribosomal RNA large subunit methyltransferase G from Citrobacter koseri (strain ATCC BAA-895 / CDC 4225-83 / SGSC4696).